A 353-amino-acid chain; its full sequence is UPF0283 membrane protein YPA_1696 (353 aa).

3 consecutive transmembrane segments (helical) span residues 71–91 (MVTA…VQWV), 101–121 (IALG…GSVV), and 214–234 (ESAL…FIAW).

Belongs to the UPF0283 family.

The protein resides in the cell inner membrane. The protein is UPF0283 membrane protein YPA_1696 of Yersinia pestis bv. Antiqua (strain Antiqua).